The primary structure comprises 166 residues: Ribosome-binding factor A (166 aa).

A disordered region spans residues 122–166 (LASTAEHAGDADPYRVDTEDDDDDTDGADAEARSDADVRRGPQSG). Residues 128–138 (HAGDADPYRVD) are compositionally biased toward basic and acidic residues. The span at 139–150 (TEDDDDDTDGAD) shows a compositional bias: acidic residues. Positions 151–166 (AEARSDADVRRGPQSG) are enriched in basic and acidic residues.

The protein belongs to the RbfA family. Monomer. Binds 30S ribosomal subunits, but not 50S ribosomal subunits or 70S ribosomes.

It localises to the cytoplasm. Its function is as follows. One of several proteins that assist in the late maturation steps of the functional core of the 30S ribosomal subunit. Associates with free 30S ribosomal subunits (but not with 30S subunits that are part of 70S ribosomes or polysomes). Required for efficient processing of 16S rRNA. May interact with the 5'-terminal helix region of 16S rRNA. The chain is Ribosome-binding factor A from Saccharopolyspora erythraea (strain ATCC 11635 / DSM 40517 / JCM 4748 / NBRC 13426 / NCIMB 8594 / NRRL 2338).